A 122-amino-acid polypeptide reads, in one-letter code: Serum amyloid A-3 protein (122 aa).

The first 18 residues, 1-18 (MKPSIAIILCILILGVDS), serve as a signal peptide directing secretion. Residues 87-122 (TGHGAEDSRADQFANEWGRSGKDPNHFRPAGLPKRY) form a disordered region.

It belongs to the SAA family. As to expression, found in various tissues.

It is found in the secreted. Functionally, major acute phase reactant. Apolipoprotein of the HDL complex. In vitro exhibits antimicrobial activity against Escherichia coli, Streptococcus uberis and Pseudomonas aeruginosa. The chain is Serum amyloid A-3 protein (Saa3) from Mus musculus (Mouse).